A 124-amino-acid chain; its full sequence is Small ribosomal subunit protein uS12 (124 aa).

A disordered region spans residues 1-32 (MPTISQLIRHGRQKQKKRTKSPALKSSPQRRG). Positions 9–20 (RHGRQKQKKRTK) are enriched in basic residues. Residue Asp-89 is modified to 3-methylthioaspartic acid.

This sequence belongs to the universal ribosomal protein uS12 family. As to quaternary structure, part of the 30S ribosomal subunit. Contacts proteins S8 and S17. May interact with IF1 in the 30S initiation complex.

With S4 and S5 plays an important role in translational accuracy. Functionally, interacts with and stabilizes bases of the 16S rRNA that are involved in tRNA selection in the A site and with the mRNA backbone. Located at the interface of the 30S and 50S subunits, it traverses the body of the 30S subunit contacting proteins on the other side and probably holding the rRNA structure together. The combined cluster of proteins S8, S12 and S17 appears to hold together the shoulder and platform of the 30S subunit. This Leptospira borgpetersenii serovar Hardjo-bovis (strain JB197) protein is Small ribosomal subunit protein uS12.